Here is a 225-residue protein sequence, read N- to C-terminus: MQLRLSSGNILNEKVHKIGIIALGSFLENHGAVLPIDTDIKIASYIALKASILTGAKFLGVVIPSTEYEYVKHGIHNKPEDVYSYLRFLINEGKKIGIEKFLIVNCHGGNVLVESFLKDLEYEFDVKVEMINITFTHASTEEVSVGYVMGIAKADKETLKEHNNFNKYPEVGMVGLKEARENNKAIDEEAKVVEKFGVKLDKELGEKILKESIDKVIEKIKEMIR.

Residues glutamate 28, histidine 30, aspartate 39, and histidine 107 each contribute to the Fe cation site.

The protein belongs to the creatininase superfamily. FAPy deformylase family. As to quaternary structure, homodimer. It depends on Fe(2+) as a cofactor. Zn(2+) serves as cofactor.

It catalyses the reaction 2-amino-5-formylamino-6-(5-phospho-D-ribosylamino)pyrimidin-4(3H)-one + H2O = 2,5-diamino-6-(1-D-ribosylamino)pyrimidin-4(3H)-one 5'-phosphate + formate + H(+). It participates in cofactor biosynthesis; coenzyme F420 biosynthesis. The protein operates within cofactor biosynthesis; riboflavin biosynthesis. Catalyzes the hydrolysis of the formamide of 2-amino-5-formylamino-6-ribosylamino-4(3H)-pyrimidinone 5'-monophosphate (FAPy) to form 2,5-diamino-6-ribosylamino-4(3H)-pyrimidinone 5'-phosphate (APy). The sequence is that of 2-amino-5-formylamino-6-ribosylaminopyrimidin-4(3H)-one 5'-monophosphate deformylase from Methanocaldococcus sp. (strain FS406-22).